A 306-amino-acid chain; its full sequence is 4-hydroxy-3-methylbut-2-enyl diphosphate reductase (306 aa).

A [4Fe-4S] cluster-binding site is contributed by Cys12. (2E)-4-hydroxy-3-methylbut-2-enyl diphosphate-binding residues include His41 and His74. Dimethylallyl diphosphate contacts are provided by His41 and His74. Isopentenyl diphosphate contacts are provided by His41 and His74. Cys96 is a binding site for [4Fe-4S] cluster. His124 is a binding site for (2E)-4-hydroxy-3-methylbut-2-enyl diphosphate. His124 contacts dimethylallyl diphosphate. His124 contributes to the isopentenyl diphosphate binding site. The active-site Proton donor is Glu126. Residue Thr164 coordinates (2E)-4-hydroxy-3-methylbut-2-enyl diphosphate. [4Fe-4S] cluster is bound at residue Cys194. Residues Ser222, Ser223, Asn224, and Ser266 each coordinate (2E)-4-hydroxy-3-methylbut-2-enyl diphosphate. Ser222, Ser223, Asn224, and Ser266 together coordinate dimethylallyl diphosphate. Positions 222, 223, 224, and 266 each coordinate isopentenyl diphosphate.

Belongs to the IspH family. The cofactor is [4Fe-4S] cluster.

It carries out the reaction isopentenyl diphosphate + 2 oxidized [2Fe-2S]-[ferredoxin] + H2O = (2E)-4-hydroxy-3-methylbut-2-enyl diphosphate + 2 reduced [2Fe-2S]-[ferredoxin] + 2 H(+). The enzyme catalyses dimethylallyl diphosphate + 2 oxidized [2Fe-2S]-[ferredoxin] + H2O = (2E)-4-hydroxy-3-methylbut-2-enyl diphosphate + 2 reduced [2Fe-2S]-[ferredoxin] + 2 H(+). Its pathway is isoprenoid biosynthesis; dimethylallyl diphosphate biosynthesis; dimethylallyl diphosphate from (2E)-4-hydroxy-3-methylbutenyl diphosphate: step 1/1. It participates in isoprenoid biosynthesis; isopentenyl diphosphate biosynthesis via DXP pathway; isopentenyl diphosphate from 1-deoxy-D-xylulose 5-phosphate: step 6/6. In terms of biological role, catalyzes the conversion of 1-hydroxy-2-methyl-2-(E)-butenyl 4-diphosphate (HMBPP) into a mixture of isopentenyl diphosphate (IPP) and dimethylallyl diphosphate (DMAPP). Acts in the terminal step of the DOXP/MEP pathway for isoprenoid precursor biosynthesis. This is 4-hydroxy-3-methylbut-2-enyl diphosphate reductase from Dechloromonas aromatica (strain RCB).